The sequence spans 156 residues: Cyanate hydratase (156 aa).

Residues Arg96, Glu99, and Ser122 contribute to the active site.

The protein belongs to the cyanase family.

It carries out the reaction cyanate + hydrogencarbonate + 3 H(+) = NH4(+) + 2 CO2. Catalyzes the reaction of cyanate with bicarbonate to produce ammonia and carbon dioxide. In Burkholderia thailandensis (strain ATCC 700388 / DSM 13276 / CCUG 48851 / CIP 106301 / E264), this protein is Cyanate hydratase.